The primary structure comprises 448 residues: uncharacterized protein (448 aa).

Residues 4 to 155 (QAIVLATFDA…SAVNLEFDSL (152 aa)) form the uDENN domain. In terms of domain architecture, cDENN spans 183–326 (LDHLGPAFYC…FKGLSRYLSF (144 aa)). The region spanning 328–428 (GESSWGLTTY…WQYGKYFWLR (101 aa)) is the dDENN domain. The helical transmembrane segment at 425–447 (FWLRRVSLIFLASTCFLFILWKL) threads the bilayer.

The protein resides in the golgi apparatus membrane. Its subcellular location is the endoplasmic reticulum membrane. This is an uncharacterized protein from Schizosaccharomyces pombe (strain 972 / ATCC 24843) (Fission yeast).